A 339-amino-acid polypeptide reads, in one-letter code: MVDPIVTKNWRDLIKPRGLVVDQDSLSNTYGKFVAEPLERGFGITLGNSLRRVLLSSLQGAAITSVKVEGVEHEFMTIPEVAEDVTDIILNLKEVLLQIHTNDVKTIRIEADGPKEIKAGDLITDAQVEVLNPGHHILTISEGGRVRAEMTARRGRGYVPAERNKVPGSPIGTIPIDALFSPIRKVNYQVTNARVGQQTDYDKLTLEVWTDGSVAPADAVAFAAKIVKEQLSIFINFDEAEEPAEEIKPVEEQKLNENLFRSVDELELSVRSANCLQNANIKTIGDLVQKTEAEMLKTKNFGRKSLKEIKEILAEMGLSLGMKLENWPPKAAPQGAPKV.

Positions 1 to 238 (MVDPIVTKNW…EQLSIFINFD (238 aa)) are alpha N-terminal domain (alpha-NTD). Residues 250–339 (VEEQKLNENL…KAAPQGAPKV (90 aa)) are alpha C-terminal domain (alpha-CTD).

The protein belongs to the RNA polymerase alpha chain family. As to quaternary structure, homodimer. The RNAP catalytic core consists of 2 alpha, 1 beta, 1 beta' and 1 omega subunit. When a sigma factor is associated with the core the holoenzyme is formed, which can initiate transcription.

It carries out the reaction RNA(n) + a ribonucleoside 5'-triphosphate = RNA(n+1) + diphosphate. DNA-dependent RNA polymerase catalyzes the transcription of DNA into RNA using the four ribonucleoside triphosphates as substrates. The polypeptide is DNA-directed RNA polymerase subunit alpha (Anaeromyxobacter dehalogenans (strain 2CP-C)).